The sequence spans 287 residues: ATP synthase gamma chain (287 aa).

Belongs to the ATPase gamma chain family. As to quaternary structure, F-type ATPases have 2 components, CF(1) - the catalytic core - and CF(0) - the membrane proton channel. CF(1) has five subunits: alpha(3), beta(3), gamma(1), delta(1), epsilon(1). CF(0) has three main subunits: a, b and c.

It localises to the cell inner membrane. In terms of biological role, produces ATP from ADP in the presence of a proton gradient across the membrane. The gamma chain is believed to be important in regulating ATPase activity and the flow of protons through the CF(0) complex. The protein is ATP synthase gamma chain of Baumannia cicadellinicola subsp. Homalodisca coagulata.